The sequence spans 241 residues: ATP-dependent dethiobiotin synthetase BioD (241 aa).

13-18 (DIGKTV) lines the ATP pocket. Mg(2+) is bound at residue T17. Residue K38 is part of the active site. S42 contributes to the substrate binding site. Residues D55, 116 to 119 (EGSG), and 180 to 181 (NK) each bind ATP. Mg(2+) is bound by residues D55 and E116.

It belongs to the dethiobiotin synthetase family. Homodimer. The cofactor is Mg(2+).

The protein resides in the cytoplasm. It catalyses the reaction (7R,8S)-7,8-diammoniononanoate + CO2 + ATP = (4R,5S)-dethiobiotin + ADP + phosphate + 3 H(+). It participates in cofactor biosynthesis; biotin biosynthesis; biotin from 7,8-diaminononanoate: step 1/2. In terms of biological role, catalyzes a mechanistically unusual reaction, the ATP-dependent insertion of CO2 between the N7 and N8 nitrogen atoms of 7,8-diaminopelargonic acid (DAPA, also called 7,8-diammoniononanoate) to form a ureido ring. In Clostridium kluyveri (strain NBRC 12016), this protein is ATP-dependent dethiobiotin synthetase BioD.